The chain runs to 398 residues: O-methyltransferase hmp5 (398 aa).

S-adenosyl-L-methionine is bound by residues 233 to 234 (GG), glutamate 261, and 283 to 284 (DF). Histidine 303 acts as the Proton acceptor in catalysis.

It belongs to the class I-like SAM-binding methyltransferase superfamily. Cation-independent O-methyltransferase family.

Its pathway is secondary metabolite biosynthesis. In terms of biological role, O-methyltransferase; part of the gene cluster that mediates the biosynthesis of hypothemycin, a resorcylic acid lactone (RAL) that irreversibly inhibits a subset of protein kinases with a conserved cysteine in the ATP binding site such as human ERK2. The first step is performed by both PKSs hmp3 and hmp8 and leads to the production of 7',8'-dehydrozearalenol (DHZ). The highly reducing PKS hpm8 synthesizes the reduced hexaketide (7S,11S,2E,8E)-7,11-dihydroxy-dodeca-2,8-dienoate, which is transferred downstream to the non-reducing PKS hpm3. Hpm3 then extends the reduced hexaketide to a nonaketide, after which regioselective cyclization and macrolactonization affords DHZ. The next step is the conversion of DHZ into aigialomycin C and is performed by the O-methyltransferase hmp5, the FAD-binding monooxygenase hmp7, and the cytochrome P450 monooxygenase hmp1. The wide substrate tolerance of the hmp5 and hmp7 implies that the reactions from DHZ to aigialomycin C can occur in any order. The steps from aigialomycin C to hypothemycin are less well established. The FAD-linked oxidoreductase hmp9 presumably catalyzes oxidation of the C-6' hydroxyl to a ketone. The timing of this oxidation is important, since the resulting enone functional group is a Michael acceptor that can react spontaneously with glutathione, an abundant metabolite in fungal cells. The glutathione S-transferase hmp2 catalyzes cis-trans isomerization of the 7',8' double bond with equilibrium favoring the trans isomer. The hpm6-encoded transporter might preferentially pump hypothemycin out of the cell relative to the trans isomer aigialomycin A. The cis-to-trans isomerization may be coupled with C-4' hydroxylation, since all known hypothemycin analogs containing the enone functional group also have hydroxyl groups at both C-4' and C-5'. In Hypomyces subiculosus (Nectria subiculosa), this protein is O-methyltransferase hmp5.